Reading from the N-terminus, the 554-residue chain is Glutamine--tRNA ligase (554 aa).

A 'HIGH' region motif is present at residues 34 to 44 (PEPNGYLHIGH). Residues 35–37 (EPN) and 41–47 (HIGHAKS) each bind ATP. L-glutamine contacts are provided by aspartate 67 and tyrosine 212. Residues threonine 231, 261-262 (RL), and 269-271 (MSK) each bind ATP. The short motif at 268-272 (VMSKR) is the 'KMSKS' region element. Positions 317–324 (TKQDNTIE) are interaction with tRNA.

Belongs to the class-I aminoacyl-tRNA synthetase family. As to quaternary structure, monomer.

Its subcellular location is the cytoplasm. The catalysed reaction is tRNA(Gln) + L-glutamine + ATP = L-glutaminyl-tRNA(Gln) + AMP + diphosphate. This is Glutamine--tRNA ligase from Escherichia coli O17:K52:H18 (strain UMN026 / ExPEC).